Here is a 102-residue protein sequence, read N- to C-terminus: MAKQKIRIRLKAYEHRILDQSADKIVETAKRTGATISGPIPLPTERTVYTVLSSPHKFKKAREQFEMRTHKRLIDIVNPTPKTVDSLMKLDLPSGVDIEIKL.

The protein belongs to the universal ribosomal protein uS10 family. As to quaternary structure, part of the 30S ribosomal subunit.

Functionally, involved in the binding of tRNA to the ribosomes. In Pediococcus pentosaceus (strain ATCC 25745 / CCUG 21536 / LMG 10740 / 183-1w), this protein is Small ribosomal subunit protein uS10.